The sequence spans 99 residues: UPF0473 protein SMU_2077c (99 aa).

Belongs to the UPF0473 family.

This chain is UPF0473 protein SMU_2077c, found in Streptococcus mutans serotype c (strain ATCC 700610 / UA159).